The primary structure comprises 623 residues: Transketolase (623 aa).

Position 1 is an N-acetylmethionine (Met-1). N6-acetyllysine is present on residues Lys-6 and Lys-11. His-37 contributes to the substrate binding site. Ser-40 and His-77 together coordinate thiamine diphosphate. Ser-104 carries the post-translational modification Phosphoserine. Thiamine diphosphate is bound at residue 123–125 (GSL). Lys-144 is modified (N6-acetyllysine). Asp-155 is a Mg(2+) binding site. Thiamine diphosphate contacts are provided by Gly-156 and Asn-185. Mg(2+) is bound by residues Asn-185 and Leu-187. An N6-acetyllysine mark is found at Lys-204, Lys-232, and Lys-241. Residues Lys-244 and His-258 each coordinate thiamine diphosphate. Residue His-258 participates in substrate binding. Lys-260 carries the post-translational modification N6-acetyllysine. Tyr-275 bears the Phosphotyrosine mark. Thr-287 carries the phosphothreonine modification. Ser-295 is modified (phosphoserine). Positions 318 and 345 each coordinate substrate. A Phosphoserine modification is found at Ser-345. Residue Lys-352 forms a Glycyl lysine isopeptide (Lys-Gly) (interchain with G-Cter in SUMO2) linkage. Catalysis depends on Glu-366, which acts as the Proton donor. Phe-392 lines the thiamine diphosphate pocket. Residues His-416 and Asp-424 each contribute to the substrate site. Gln-428 serves as a coordination point for thiamine diphosphate. Position 474 (Arg-474) interacts with substrate. Residues Lys-538 and Lys-603 each carry the N6-acetyllysine modification.

Belongs to the transketolase family. In terms of assembly, homodimer. Mg(2+) is required as a cofactor. Ca(2+) serves as cofactor. It depends on Mn(2+) as a cofactor. The cofactor is Co(2+). Requires thiamine diphosphate as cofactor.

It carries out the reaction D-sedoheptulose 7-phosphate + D-glyceraldehyde 3-phosphate = aldehydo-D-ribose 5-phosphate + D-xylulose 5-phosphate. Its function is as follows. Catalyzes the transfer of a two-carbon ketol group from a ketose donor to an aldose acceptor, via a covalent intermediate with the cofactor thiamine pyrophosphate. The chain is Transketolase (Tkt) from Mus musculus (Mouse).